Here is a 3388-residue protein sequence, read N- to C-terminus: Genome polyprotein (3388 aa).

An interaction with host EXOC1 region spans residues 1–15 (MNDQRKKARNTPFNM). At 1 to 101 (MNDQRKKARN…LNILNRRRRT (101 aa)) the chain is on the cytoplasmic side. The segment at 37–72 (MLQGRGPLKLFMALVAFLRFLTIPPTAGILKRWGTI) is hydrophobic; homodimerization of capsid protein C. Positions 101–114 (TAGMIIMLIPTVMA) are cleaved as a propeptide — ER anchor for the capsid protein C, removed in mature form by serine protease NS3. Residues 102-122 (AGMIIMLIPTVMAFHLTTRNG) form a helical membrane-spanning segment. Residues 123-238 (EPHMIVSRQE…GAWKHAQRIE (116 aa)) lie on the Extracellular side of the membrane. The N-linked (GlcNAc...) asparagine; by host glycan is linked to asparagine 183. Residues 239–259 (TWILRHPGFTIMAAILAYTIG) form a helical membrane-spanning segment. The Cytoplasmic portion of the chain corresponds to 260–265 (TTHFQR). Residues 266–280 (VLIFILLTAIAPSMT) form a helical membrane-spanning segment. Residues 281–725 (MRCIGISNRD…LHQVFGAIYG (445 aa)) are Extracellular-facing. 4 disulfides stabilise this stretch: cysteine 283/cysteine 310, cysteine 340/cysteine 401, cysteine 354/cysteine 385, and cysteine 372/cysteine 396. The N-linked (GlcNAc...) asparagine; by host glycan is linked to asparagine 347. A fusion peptide region spans residues 378-391 (DRGWGNGCGLFGKG). N-linked (GlcNAc...) asparagine; by host glycosylation occurs at asparagine 433. 2 disulfide bridges follow: cysteine 465-cysteine 565 and cysteine 582-cysteine 613. A helical transmembrane segment spans residues 726–746 (AAFSGVSWTMKILIGVIITWI). The Cytoplasmic portion of the chain corresponds to 747–752 (GMNSRS). The chain crosses the membrane as a helical span at residues 753-773 (TSLSVSLVLVGIVTLYLGVMV). The Extracellular segment spans residues 774 to 1195 (QADSGCVVSW…MVGATMTDDI (422 aa)). 6 cysteine pairs are disulfide-bonded: cysteine 779/cysteine 790, cysteine 830/cysteine 918, cysteine 954/cysteine 998, cysteine 1055/cysteine 1104, cysteine 1066/cysteine 1088, and cysteine 1087/cysteine 1091. N-linked (GlcNAc...) asparagine; by host glycosylation is found at asparagine 905 and asparagine 982. N-linked (GlcNAc...) asparagine; by host glycosylation is present at asparagine 1134. A helical membrane pass occupies residues 1196–1220 (GMGVTYLALLAAFKVRPTFAAGLLL). Over 1221–1226 (RKLTSK) the chain is Cytoplasmic. Residues 1227-1245 (ELMMTTIGIVLLSQSSIPE) form a helical membrane-spanning segment. Residues 1246 to 1269 (TILELTDALALGMMVLKMVRNMEK) are Lumenal-facing. Residues 1270–1290 (YQLAVTIMAILCVPNAVILQN) form a helical membrane-spanning segment. A topological domain (cytoplasmic) is located at residue alanine 1291. The helical transmembrane segment at 1292–1310 (WKVSCTILAVVSVSPLFLT) threads the bilayer. The Lumenal segment spans residues 1311–1317 (SSQQKAD). The chain crosses the membrane as a helical span at residues 1318–1338 (WIPLALTIKGLNPTAIFLTTL). The Cytoplasmic segment spans residues 1339–1346 (SRTSKKRS). The helical transmembrane segment at 1347–1367 (WPLNEAIMAVGMVSILASSLL) threads the bilayer. Residues 1368-1370 (KND) are Lumenal-facing. Residues 1371–1391 (TPMTGPLVAGGLLTVCYVLTG) traverse the membrane as a helical segment. The Cytoplasmic segment spans residues 1392–1447 (RSADLELERATDVKWDDQAEISGSSPILSITISEDGSMSIKNEEEEQTLTILIRTG). An interacts with and activates NS3 protease region spans residues 1398-1437 (LERATDVKWDDQAEISGSSPILSITISEDGSMSIKNEEEE). The helical intramembrane region spans 1448–1468 (LLVISGLFPVSIPITAAAWYL). Residues 1469–2144 (WEVKKQRAGV…LSELPETLET (676 aa)) lie on the Cytoplasmic side of the membrane. Residues 1476 to 1653 (AGVLWDVPSP…EKSIEDNPEI (178 aa)) enclose the Peptidase S7 domain. Active-site charge relay system; for serine protease NS3 activity residues include histidine 1526, aspartate 1550, and serine 1610. The region spanning 1655–1811 (DDIFRKRRLT…QSNAPIMDEE (157 aa)) is the Helicase ATP-binding domain. An important for RNA-binding region spans residues 1659 to 1662 (RKRR). 1668-1675 (LHPGAGKT) lines the ATP pocket. Residues 1759–1762 (DEAH) carry the DEAH box motif. A Helicase C-terminal domain is found at 1821–1988 (SGHEWVTDFK…IIPSMFEPER (168 aa)). Lysine 1863 carries the post-translational modification N6-acetyllysine; by host. Residues 2145 to 2165 (LLLLTLLATVTGGIFLFLMSG) traverse the membrane as a helical segment. The Lumenal portion of the chain corresponds to 2166 to 2167 (RG). Positions 2168–2188 (IGKMTLGMCCIITASILLWYA) form an intramembrane region, helical. Residue glutamine 2189 is a topological domain, lumenal. Residues 2190 to 2210 (IQPHWIAASIILEFFLIVLLI) traverse the membrane as a helical segment. Residues 2211-2225 (PEPEKQRTPQDNQLT) lie on the Cytoplasmic side of the membrane. The helical transmembrane segment at 2226–2246 (YVIIAILTVVAATMANEMGFL) threads the bilayer. At 2247-2271 (EKTKKDLGLGNIATQQPESNILDID) the chain is on the lumenal side. An intramembrane region (helical) is located at residues 2272 to 2292 (LRPASAWTLYAVATTFITPML). At 2293–2313 (RHSIENSSVNVSLTAIANQAT) the chain is on the lumenal side. 2 N-linked (GlcNAc...) asparagine; by host glycosylation sites follow: asparagine 2298 and asparagine 2302. An intramembrane region (helical) is located at residues 2314–2334 (VLMGLGKGWPLSKMDIGVPLL). The Lumenal segment spans residues 2335–2344 (AIGCYSQVNP). Residues 2345 to 2365 (ITLTAALLLLVAHYAIIGPGL) form a helical membrane-spanning segment. The Cytoplasmic portion of the chain corresponds to 2366-2410 (QAKATREAQKRAAAGIMKNPTVDGITVIDLDPIPYDPKFEKQLGQ). The helical transmembrane segment at 2411-2431 (VMLLVLCVTQVLMMRTTWALC) threads the bilayer. Over 2432–2456 (EALTLATGPVSTLWEGNPGRFWNTT) the chain is Lumenal. A glycan (N-linked (GlcNAc...) asparagine; by host) is linked at asparagine 2454. A helical transmembrane segment spans residues 2457–2477 (IAVSMANIFRGSYLAGAGLLF). Topologically, residues 2478–3388 (SIMKNTTSTR…REEEEAGVLW (911 aa)) are cytoplasmic. The region spanning 2490–2752 (TGNIGETLGE…DVDLGSGTRN (263 aa)) is the mRNA cap 0-1 NS5-type MT domain. Serine 2544 is a binding site for S-adenosyl-L-methionine. Serine 2544 carries the phosphoserine modification. Lysine 2549 serves as the catalytic For 2'-O-MTase activity. The short motif at 2565-2568 (VVDL) is the SUMO-interacting motif element. 6 residues coordinate S-adenosyl-L-methionine: glycine 2574, tryptophan 2575, threonine 2592, lysine 2593, aspartate 2619, and valine 2620. Catalysis depends on aspartate 2634, which acts as the For 2'-O-MTase activity. Isoleucine 2635 serves as a coordination point for S-adenosyl-L-methionine. Residues lysine 2669 and glutamate 2705 each act as for 2'-O-MTase activity in the active site. Tyrosine 2707 is an S-adenosyl-L-methionine binding site. Positions 2926, 2930, 2935, and 2938 each coordinate Zn(2+). Positions 3017-3166 (AMYADDTAGW…PLDDRFARAL (150 aa)) constitute a RdRp catalytic domain. Zn(2+) contacts are provided by histidine 3200, cysteine 3216, and cysteine 3335.

In the N-terminal section; belongs to the class I-like SAM-binding methyltransferase superfamily. mRNA cap 0-1 NS5-type methyltransferase family. Homodimer. Interacts (via N-terminus) with host EXOC1 (via C-terminus); this interaction results in EXOC1 degradation through the proteasome degradation pathway. As to quaternary structure, forms heterodimers with envelope protein E in the endoplasmic reticulum and Golgi. In terms of assembly, homodimer; in the endoplasmic reticulum and Golgi. Interacts with protein prM. Interacts with non-structural protein 1. Homodimer; Homohexamer when secreted. Interacts with envelope protein E. Interacts with host PRKAA1. As to quaternary structure, interacts (via N-terminus) with serine protease NS3. In terms of assembly, forms a heterodimer with serine protease NS3. May form homooligomers. Forms a heterodimer with NS2B. Interacts with NS4B. Interacts with unphosphorylated RNA-directed RNA polymerase NS5; this interaction stimulates RNA-directed RNA polymerase NS5 guanylyltransferase activity. Interacts with host SHFL. As to quaternary structure, interacts with host MAVS; this interaction inhibits the synthesis of IFN-beta. Interacts with host SHFL. Interacts with host AUP1; the interaction occurs in the presence of Dengue virus NS4B and induces lipophagy which facilitates production of virus progeny particles. May interact with host SRPRA and SEC61G. In terms of assembly, interacts with serine protease NS3. Homodimer. Interacts with host STAT2; this interaction inhibits the phosphorylation of the latter, and, when all viral proteins are present (polyprotein), targets STAT2 for degradation. Interacts with serine protease NS3. Interacts with host PAF1 complex; the interaction may prevent the recruitment of the PAF1 complex to interferon-responsive genes, and thus reduces the immune response. Post-translationally, specific enzymatic cleavages in vivo yield mature proteins. Cleavages in the lumen of endoplasmic reticulum are performed by host signal peptidase, whereas cleavages in the cytoplasmic side are performed by serine protease NS3. Signal cleavage at the 2K-4B site requires a prior NS3 protease-mediated cleavage at the 4A-2K site. Cleaved in post-Golgi vesicles by a host furin, releasing the mature small envelope protein M, and peptide pr. This cleavage is incomplete as up to 30% of viral particles still carry uncleaved prM. In terms of processing, N-glycosylated. Post-translationally, N-glycosylated. The excreted form is glycosylated and this is required for efficient secretion of the protein from infected cells. Acetylated by host KAT5. Acetylation modulates NS3 RNA-binding and unwinding activities and plays an important positive role for viral replication. In terms of processing, sumoylation of RNA-directed RNA polymerase NS5 increases NS5 protein stability allowing proper viral RNA replication. Post-translationally, phosphorylated on serines residues. This phosphorylation may trigger NS5 nuclear localization.

The protein localises to the virion. The protein resides in the host nucleus. Its subcellular location is the host cytoplasm. It localises to the host perinuclear region. It is found in the secreted. The protein localises to the virion membrane. The protein resides in the host endoplasmic reticulum membrane. Its subcellular location is the host mitochondrion. The enzyme catalyses Selective hydrolysis of -Xaa-Xaa-|-Yaa- bonds in which each of the Xaa can be either Arg or Lys and Yaa can be either Ser or Ala.. It catalyses the reaction RNA(n) + a ribonucleoside 5'-triphosphate = RNA(n+1) + diphosphate. It carries out the reaction a ribonucleoside 5'-triphosphate + H2O = a ribonucleoside 5'-diphosphate + phosphate + H(+). The catalysed reaction is ATP + H2O = ADP + phosphate + H(+). The enzyme catalyses a 5'-end (5'-triphosphoguanosine)-ribonucleoside in mRNA + S-adenosyl-L-methionine = a 5'-end (N(7)-methyl 5'-triphosphoguanosine)-ribonucleoside in mRNA + S-adenosyl-L-homocysteine. It catalyses the reaction a 5'-end (N(7)-methyl 5'-triphosphoguanosine)-ribonucleoside in mRNA + S-adenosyl-L-methionine = a 5'-end (N(7)-methyl 5'-triphosphoguanosine)-(2'-O-methyl-ribonucleoside) in mRNA + S-adenosyl-L-homocysteine + H(+). Plays a role in virus budding by binding to the cell membrane and gathering the viral RNA into a nucleocapsid that forms the core of a mature virus particle. During virus entry, may induce genome penetration into the host cytoplasm after hemifusion induced by the surface proteins. Can migrate to the cell nucleus where it modulates host functions. Overcomes the anti-viral effects of host EXOC1 by sequestering and degrading the latter through the proteasome degradation pathway. Its function is as follows. Inhibits RNA silencing by interfering with host Dicer. In terms of biological role, prevents premature fusion activity of envelope proteins in trans-Golgi by binding to envelope protein E at pH6.0. After virion release in extracellular space, gets dissociated from E dimers. Functionally, acts as a chaperone for envelope protein E during intracellular virion assembly by masking and inactivating envelope protein E fusion peptide. prM is the only viral peptide matured by host furin in the trans-Golgi network probably to avoid catastrophic activation of the viral fusion activity in acidic Golgi compartment prior to virion release. prM-E cleavage is inefficient, and many virions are only partially matured. These uncleaved prM would play a role in immune evasion. May play a role in virus budding. Exerts cytotoxic effects by activating a mitochondrial apoptotic pathway through M ectodomain. May display a viroporin activity. Its function is as follows. Binds to host cell surface receptor and mediates fusion between viral and cellular membranes. Envelope protein is synthesized in the endoplasmic reticulum in the form of heterodimer with protein prM. They play a role in virion budding in the ER, and the newly formed immature particle is covered with 60 spikes composed of heterodimer between precursor prM and envelope protein E. The virion is transported to the Golgi apparatus where the low pH causes dissociation of PrM-E heterodimers and formation of E homodimers. prM-E cleavage is inefficient, and many virions are only partially matured. These uncleaved prM would play a role in immune evasion. In terms of biological role, involved in immune evasion, pathogenesis and viral replication. Once cleaved off the polyprotein, is targeted to three destinations: the viral replication cycle, the plasma membrane and the extracellular compartment. Essential for viral replication. Required for formation of the replication complex and recruitment of other non-structural proteins to the ER-derived membrane structures. Excreted as a hexameric lipoparticle that plays a role against host immune response. Antagonizing the complement function. Binds to the host macrophages and dendritic cells. Inhibits signal transduction originating from Toll-like receptor 3 (TLR3). Mediates complement activation, which may contribute to the pathogenesis of the vascular leakage that occurs in severe dengue disease. Activates autophagy through the AMPK/ERK/mTOR signaling pathway. Mechanistically, acts as the assembly platform for STK11-AMPK interactions and promotes STK11-AMPK interactions. In turn, promotes phosphorylation of the AMPK kinase structural domain and activates AMPK, thereby positively regulating the AMPK/ERK/mTOR signaling pathway and inducing autophagy. Functionally, disrupts the host endothelial glycocalyx layer of host pulmonary microvascular endothelial cells, inducing degradation of sialic acid and shedding of heparan sulfate proteoglycans. NS1 induces expression of sialidases, heparanase, and activates cathepsin L, which activates heparanase via enzymatic cleavage. These effects are probably linked to the endothelial hyperpermeability observed in severe dengue disease. Component of the viral RNA replication complex that functions in virion assembly and antagonizes the host immune response. Its function is as follows. Required cofactor for the serine protease function of NS3. May have membrane-destabilizing activity and form viroporins. In terms of biological role, displays three enzymatic activities: serine protease, NTPase and RNA helicase. NS3 serine protease, in association with NS2B, performs its autocleavage and cleaves the polyprotein at dibasic sites in the cytoplasm: C-prM, NS2A-NS2B, NS2B-NS3, NS3-NS4A, NS4A-2K and NS4B-NS5. NS3 RNA helicase binds RNA and unwinds dsRNA in the 3' to 5' direction. Functionally, regulates the ATPase activity of the NS3 helicase activity. NS4A allows NS3 helicase to conserve energy during unwinding. Plays a role in the inhibition of the host innate immune response. Interacts with host MAVS and thereby prevents the interaction between RIGI and MAVS. In turn, IFN-beta production is impaired. Interacts with host AUP1 which mediates induction of lipophagy in host cells and facilitates production of virus progeny particles. Functions as a signal peptide for NS4B and is required for the interferon antagonism activity of the latter. Its function is as follows. Induces the formation of ER-derived membrane vesicles where the viral replication takes place. Inhibits interferon (IFN)-induced host STAT1 phosphorylation and nuclear translocation, thereby preventing the establishment of cellular antiviral state by blocking the IFN-alpha/beta pathway. In terms of biological role, replicates the viral (+) and (-) RNA genome, and performs the capping of genomes in the cytoplasm. NS5 methylates viral RNA cap at guanine N-7 and ribose 2'-O positions. Besides its role in RNA genome replication, also prevents the establishment of cellular antiviral state by blocking the interferon-alpha/beta (IFN-alpha/beta) signaling pathway. Inhibits host TYK2 and STAT2 phosphorylation, thereby preventing activation of JAK-STAT signaling pathway. May reduce immune responses by preventing the recruitment of the host PAF1 complex to interferon-responsive genes. In Aedimorphus (Red guenon), this protein is Genome polyprotein.